Consider the following 353-residue polypeptide: DNA polymerase IV (353 aa).

The UmuC domain occupies 14–198 (IIHIDMDAFF…MDISKFHGVG (185 aa)). Residues aspartate 18 and aspartate 116 each contribute to the Mg(2+) site. Glutamate 117 is an active-site residue.

This sequence belongs to the DNA polymerase type-Y family. In terms of assembly, monomer. Mg(2+) serves as cofactor.

It localises to the cytoplasm. The enzyme catalyses DNA(n) + a 2'-deoxyribonucleoside 5'-triphosphate = DNA(n+1) + diphosphate. In terms of biological role, poorly processive, error-prone DNA polymerase involved in untargeted mutagenesis. Copies undamaged DNA at stalled replication forks, which arise in vivo from mismatched or misaligned primer ends. These misaligned primers can be extended by PolIV. Exhibits no 3'-5' exonuclease (proofreading) activity. May be involved in translesional synthesis, in conjunction with the beta clamp from PolIII. This Streptococcus pneumoniae serotype 2 (strain D39 / NCTC 7466) protein is DNA polymerase IV.